The sequence spans 114 residues: Beta-microseminoprotein E1 (114 aa).

Positions 1-20 are cleaved as a signal peptide; sequence MNVLLGGLVIFATFVTLCNG. 5 cysteine pairs are disulfide-bonded: cysteine 22/cysteine 70, cysteine 38/cysteine 62, cysteine 57/cysteine 93, cysteine 60/cysteine 69, and cysteine 84/cysteine 107.

It belongs to the beta-microseminoprotein family.

It localises to the secreted. This chain is Beta-microseminoprotein E1 (MSPE), found in Saguinus oedipus (Cotton-top tamarin).